A 287-amino-acid chain; its full sequence is Phosphatidylserine decarboxylase proenzyme (287 aa).

Active-site charge relay system; for autoendoproteolytic cleavage activity residues include D90, H147, and S253. The Schiff-base intermediate with substrate; via pyruvic acid; for decarboxylase activity role is filled by S253. At S253 the chain carries Pyruvic acid (Ser); by autocatalysis.

This sequence belongs to the phosphatidylserine decarboxylase family. PSD-B subfamily. Prokaryotic type I sub-subfamily. As to quaternary structure, heterodimer of a large membrane-associated beta subunit and a small pyruvoyl-containing alpha subunit. The cofactor is pyruvate. Post-translationally, is synthesized initially as an inactive proenzyme. Formation of the active enzyme involves a self-maturation process in which the active site pyruvoyl group is generated from an internal serine residue via an autocatalytic post-translational modification. Two non-identical subunits are generated from the proenzyme in this reaction, and the pyruvate is formed at the N-terminus of the alpha chain, which is derived from the carboxyl end of the proenzyme. The autoendoproteolytic cleavage occurs by a canonical serine protease mechanism, in which the side chain hydroxyl group of the serine supplies its oxygen atom to form the C-terminus of the beta chain, while the remainder of the serine residue undergoes an oxidative deamination to produce ammonia and the pyruvoyl prosthetic group on the alpha chain. During this reaction, the Ser that is part of the protease active site of the proenzyme becomes the pyruvoyl prosthetic group, which constitutes an essential element of the active site of the mature decarboxylase.

It localises to the cell membrane. The catalysed reaction is a 1,2-diacyl-sn-glycero-3-phospho-L-serine + H(+) = a 1,2-diacyl-sn-glycero-3-phosphoethanolamine + CO2. The protein operates within phospholipid metabolism; phosphatidylethanolamine biosynthesis; phosphatidylethanolamine from CDP-diacylglycerol: step 2/2. Catalyzes the formation of phosphatidylethanolamine (PtdEtn) from phosphatidylserine (PtdSer). The polypeptide is Phosphatidylserine decarboxylase proenzyme (Aliivibrio salmonicida (strain LFI1238) (Vibrio salmonicida (strain LFI1238))).